Here is a 416-residue protein sequence, read N- to C-terminus: Solute carrier family 35 member D3 (416 aa).

The next 10 membrane-spanning stretches (helical) occupy residues 9-29 (VLGI…NILL), 38-58 (FSFL…SLEL), 64-84 (LIAV…VAVL), 103-123 (MYVV…VLVL), 131-151 (GVLA…AGDL), 155-175 (PIGY…LVLI), 187-207 (LTAQ…CSFA), 224-244 (AMVC…FTTL), 257-277 (FVGV…FSDV), and 280-300 (TSLF…YCVA). The disordered stretch occupies residues 334 to 384 (MEELPGEGGNGRSEGGEAAGGPAQESRQEVRGSPRGVPLVAGSSEEGSRRS). The span at 339 to 352 (GEGGNGRSEGGEAA) shows a compositional bias: gly residues.

The protein belongs to the TPT transporter family. SLC35D subfamily. As to quaternary structure, could interact with ATG14, BECN1 and PIK3C3 that form the PI3KC3-C1/AIC/autophagy initiation complex; enhancing the formation of the AIC and promoting autophagy.

The protein resides in the cytoplasmic vesicle. The protein localises to the secretory vesicle. It localises to the synaptic vesicle membrane. It is found in the early endosome membrane. Its subcellular location is the endoplasmic reticulum membrane. It catalyses the reaction UDP-alpha-D-glucose(in) = UDP-alpha-D-glucose(out). Its activity is regulated as follows. Inhibited by proton uncouplers that directly abolish the proton electrochemical gradient. Its function is as follows. Probable UDP-glucose transmembrane transporter involved in UDP-glucose transport from the cytosol to the lumen of synaptic vesicles. It is involved in platelet dense granules maturation. Alternatively, could function as a molecular adapter enhancing the formation of the PI3KC3-C1/AIC/autophagy initiation complex to promote autophagy in dopaminergic neurons. Could also regulate the plasma membrane localization of the D(1A) dopamine receptor/DRD1 and dopamine signaling. The chain is Solute carrier family 35 member D3 from Homo sapiens (Human).